A 194-amino-acid chain; its full sequence is 7-methyl-GTP pyrophosphatase (194 aa).

Aspartate 69 acts as the Proton acceptor in catalysis.

The protein belongs to the Maf family. YceF subfamily. A divalent metal cation is required as a cofactor.

The protein resides in the cytoplasm. It catalyses the reaction N(7)-methyl-GTP + H2O = N(7)-methyl-GMP + diphosphate + H(+). Its function is as follows. Nucleoside triphosphate pyrophosphatase that hydrolyzes 7-methyl-GTP (m(7)GTP). May have a dual role in cell division arrest and in preventing the incorporation of modified nucleotides into cellular nucleic acids. The sequence is that of 7-methyl-GTP pyrophosphatase (yceF1) from Shigella boydii serotype 4 (strain Sb227).